A 113-amino-acid chain; its full sequence is Iron-sulfur cluster insertion protein ErpA (113 aa).

Iron-sulfur cluster-binding residues include Cys-41, Cys-105, and Cys-107.

It belongs to the HesB/IscA family. As to quaternary structure, homodimer. Iron-sulfur cluster serves as cofactor.

In terms of biological role, required for insertion of 4Fe-4S clusters for at least IspG. This chain is Iron-sulfur cluster insertion protein ErpA, found in Vibrio vulnificus (strain YJ016).